The following is a 124-amino-acid chain: Max-like protein 1 (124 aa).

A compositionally biased stretch (acidic residues) spans 1–10 (MSDMSDLEDD). A disordered region spans residues 1–44 (MSDMSDLEDDQTGHCGSGEHSGPFDPKRHAREQHNALERRRRDN). Residues 29–42 (HAREQHNALERRRR) are basic motif. Residues 29 to 82 (HAREQHNALERRRRDNIKDMYTSLREVVPDANGERVQASRAVILKKAIESIEKG) enclose the bHLH domain. Basic and acidic residues predominate over residues 32–44 (EQHNALERRRRDN). The tract at residues 43–82 (DNIKDMYTSLREVVPDANGERVQASRAVILKKAIESIEKG) is helix-loop-helix motif. Residues 86–113 (SATLSVDVAEQESKNAKLREEIARLKAK) are a coiled coil.

This sequence belongs to the MAX family. In terms of assembly, heterodimer with mdl-1 in presence and absence of DNA. Interacts with tdpt-1; the interaction promotes axon regeneration after injury. As to expression, expressed in D-type motor neurons.

The protein localises to the nucleus. In terms of biological role, transcriptional regulator which binds to the E box motif 5'-CACGTG-3', when in a heterodimeric complex with mdl-1. Involved in the control of lifespan in response to dietary restriction, the decline in protein homeostasis associated with normal aging and may overlap with the insulin-like signaling pathway. Involved in promoting infection by the microsporidian pathogen N.parisii. Required for the expression of svh-2 and the promotion of axon regeneration after injury. The chain is Max-like protein 1 from Caenorhabditis elegans.